A 197-amino-acid polypeptide reads, in one-letter code: Adenylate kinase (197 aa).

16–21 (GAGKGT) provides a ligand contact to ATP. Residues 36–65 (STGDILRDHVARGTALGQQAGPLMEAGQLV) form an NMP region. AMP contacts are provided by residues threonine 37, arginine 42, 63 to 65 (QLV), 90 to 93 (GFPR), and glutamine 97. Residues 131–147 (DRGRQAVAEGRAPRADD) form an LID region. Arginine 132 lines the ATP pocket. The tract at residues 137–158 (VAEGRAPRADDNEETARKRQQV) is disordered. Over residues 141 to 153 (RAPRADDNEETAR) the composition is skewed to basic and acidic residues. Positions 144 and 155 each coordinate AMP. Glycine 183 contacts ATP.

It belongs to the adenylate kinase family. As to quaternary structure, monomer.

Its subcellular location is the cytoplasm. It carries out the reaction AMP + ATP = 2 ADP. It participates in purine metabolism; AMP biosynthesis via salvage pathway; AMP from ADP: step 1/1. Its function is as follows. Catalyzes the reversible transfer of the terminal phosphate group between ATP and AMP. Plays an important role in cellular energy homeostasis and in adenine nucleotide metabolism. The sequence is that of Adenylate kinase from Deinococcus radiodurans (strain ATCC 13939 / DSM 20539 / JCM 16871 / CCUG 27074 / LMG 4051 / NBRC 15346 / NCIMB 9279 / VKM B-1422 / R1).